The following is a 199-amino-acid chain: Inducible T-cell costimulator (199 aa).

Residues 1–20 (MKSGLWYFFLFCLRIKVLTG) form the signal peptide. The Extracellular segment spans residues 21–140 (EINGSANYEM…YESQLCCQLK (120 aa)). The region spanning 30–132 (MFIFHNGGVQ…LTGGYLHIYE (103 aa)) is the Ig-like V-type domain. Disulfide bonds link C42–C109 and C63–C83. N-linked (GlcNAc...) asparagine glycans are attached at residues N89 and N110. A helical membrane pass occupies residues 141 to 161 (FWLPIGCAAFVVVCILGCILI). Residues 162–199 (CWLTKKKYSSSVHDPNGEYMFMRAVNTAKKSRLTDVTL) lie on the Cytoplasmic side of the membrane.

As to quaternary structure, homodimer; disulfide-linked. Interacts with ICOSLG. Interacts with PIK3R1. Interacts with TBK1; this interaction is critical for the maturation of T follicular regulatory cells. Post-translationally, N-glycosylated. As to expression, activated T-cells. Highly expressed on tonsillar T-cells, which are closely associated with B-cells in the apical light zone of germinal centers, the site of terminal B-cell maturation. Expressed at lower levels in thymus, lung, lymph node and peripheral blood leukocytes. Expressed in the medulla of fetal and newborn thymus.

It localises to the cell membrane. Its subcellular location is the secreted. Stimulatory receptor expressed in activated or antigen-experienced T-cells that plays an important role in the immune response. Upon binding to its ligand ICOSL expressed on antigen presenting cells (APCs), delivers costimulatory signals that enhances all basic T-cell responses to a foreign antigen, namely proliferation, secretion of lymphokines including IL10, up-regulation of molecules that mediate cell-cell interaction, and effective help for antibody secretion by B-cells. Also acts as a costimulatory receptor critical for the differentiation of T follicular regulatory cells upon immune challenges such as viral infection. Mechanistically, potentiates TCR-induced calcium flux by augmenting PLCG1 activation and actin remodeling. In addition, activates PI3K signaling pathways independently of calcium flux. Essential both for efficient interaction between T and B-cells and for normal antibody responses to T-cell dependent antigens. Prevents the apoptosis of pre-activated T-cells. Plays a critical role in CD40-mediated class switching of immunoglobin isotypes. The sequence is that of Inducible T-cell costimulator (ICOS) from Homo sapiens (Human).